The primary structure comprises 106 residues: Putative protein SH (106 aa).

A disordered region spans residues 48-106 (HSQQNNSGHQFGDRFHSKGHQDTEGRILWKEASTRTTDSTETADTQLVQRQGNGGICLS). The segment covering 58–80 (FGDRFHSKGHQDTEGRILWKEAS) has biased composition (basic and acidic residues). Low complexity predominate over residues 81-92 (TRTTDSTETADT).

Heart.

Its function is as follows. May be involved with the regulation of GNRH gene expression. It is not known if this protein is transcribed. The chain is Putative protein SH from Rattus norvegicus (Rat).